A 441-amino-acid chain; its full sequence is Ribulose bisphosphate carboxylase large chain (441 aa).

2 residues coordinate substrate: N89 and T139. Catalysis depends on K141, which acts as the Proton acceptor. K143 contacts substrate. Positions 167, 169, and 170 each coordinate Mg(2+). K167 bears the N6-carboxylysine mark. H260 acts as the Proton acceptor in catalysis. Substrate-binding residues include R261, H293, and S345.

The protein belongs to the RuBisCO large chain family. Type I subfamily. Heterohexadecamer of 8 large chains and 8 small chains; disulfide-linked. The disulfide link is formed within the large subunit homodimers. Requires Mg(2+) as cofactor. Post-translationally, the disulfide bond which can form in the large chain dimeric partners within the hexadecamer appears to be associated with oxidative stress and protein turnover.

It localises to the plastid. Its subcellular location is the chloroplast. The catalysed reaction is 2 (2R)-3-phosphoglycerate + 2 H(+) = D-ribulose 1,5-bisphosphate + CO2 + H2O. It carries out the reaction D-ribulose 1,5-bisphosphate + O2 = 2-phosphoglycolate + (2R)-3-phosphoglycerate + 2 H(+). In terms of biological role, ruBisCO catalyzes two reactions: the carboxylation of D-ribulose 1,5-bisphosphate, the primary event in carbon dioxide fixation, as well as the oxidative fragmentation of the pentose substrate in the photorespiration process. Both reactions occur simultaneously and in competition at the same active site. This is Ribulose bisphosphate carboxylase large chain from Polemonium reptans (Greek valerian).